The primary structure comprises 239 residues: Demethylmenaquinone methyltransferase (239 aa).

Residues Thr68, Asp86, and 111–112 (NG) contribute to the S-adenosyl-L-methionine site.

This sequence belongs to the class I-like SAM-binding methyltransferase superfamily. MenG/UbiE family.

It catalyses the reaction a 2-demethylmenaquinol + S-adenosyl-L-methionine = a menaquinol + S-adenosyl-L-homocysteine + H(+). Its pathway is quinol/quinone metabolism; menaquinone biosynthesis; menaquinol from 1,4-dihydroxy-2-naphthoate: step 2/2. Functionally, methyltransferase required for the conversion of demethylmenaquinol (DMKH2) to menaquinol (MKH2). The protein is Demethylmenaquinone methyltransferase of Tropheryma whipplei (strain TW08/27) (Whipple's bacillus).